The chain runs to 428 residues: 5-methylthioadenosine/S-adenosylhomocysteine deaminase (428 aa).

2 residues coordinate Zn(2+): His-65 and His-67. Residues Glu-94, Arg-158, and His-184 each contribute to the substrate site. His-211 provides a ligand contact to Zn(2+). Substrate is bound by residues Glu-214 and Asp-299. Asp-299 is a Zn(2+) binding site.

This sequence belongs to the metallo-dependent hydrolases superfamily. MTA/SAH deaminase family. Requires Zn(2+) as cofactor.

It carries out the reaction S-adenosyl-L-homocysteine + H2O + H(+) = S-inosyl-L-homocysteine + NH4(+). It catalyses the reaction S-methyl-5'-thioadenosine + H2O + H(+) = S-methyl-5'-thioinosine + NH4(+). In terms of biological role, catalyzes the deamination of 5-methylthioadenosine and S-adenosyl-L-homocysteine into 5-methylthioinosine and S-inosyl-L-homocysteine, respectively. Is also able to deaminate adenosine. In Moorella thermoacetica (strain ATCC 39073 / JCM 9320), this protein is 5-methylthioadenosine/S-adenosylhomocysteine deaminase.